The following is a 403-amino-acid chain: Acetyl-CoA acetyltransferase IA (403 aa).

Cys-91 serves as the catalytic Acyl-thioester intermediate. Catalysis depends on proton acceptor residues His-353 and Cys-383. The Microbody targeting signal signature appears at 401 to 403; sequence AKL.

This sequence belongs to the thiolase-like superfamily. Thiolase family. Multimeric.

The protein localises to the peroxisome. It catalyses the reaction 2 acetyl-CoA = acetoacetyl-CoA + CoA. It functions in the pathway metabolic intermediate biosynthesis; (R)-mevalonate biosynthesis; (R)-mevalonate from acetyl-CoA: step 1/3. In Candida tropicalis (Yeast), this protein is Acetyl-CoA acetyltransferase IA (PACTA).